Reading from the N-terminus, the 163-residue chain is Periplasmic nitrate reductase, electron transfer subunit (163 aa).

Positions Met-1–Ala-32 are cleaved as a signal peptide. Positions 76, 90, 93, 94, 111, 130, 133, and 134 each coordinate heme c.

Belongs to the NapB family. In terms of assembly, component of the periplasmic nitrate reductase NapAB complex composed of NapA and NapB. Binds 2 heme C groups per subunit.

Its subcellular location is the periplasm. Functionally, electron transfer subunit of the periplasmic nitrate reductase complex NapAB. Receives electrons from the membrane-anchored tetraheme c-type NapC protein and transfers these to NapA subunit, thus allowing electron flow between membrane and periplasm. Essential for periplasmic nitrate reduction with nitrate as the terminal electron acceptor. The polypeptide is Periplasmic nitrate reductase, electron transfer subunit (Neorhizobium galegae (Rhizobium galegae)).